The primary structure comprises 468 residues: ATP synthase subunit beta (468 aa).

155–162 serves as a coordination point for ATP; sequence GGAGVGKT.

The protein belongs to the ATPase alpha/beta chains family. F-type ATPases have 2 components, CF(1) - the catalytic core - and CF(0) - the membrane proton channel. CF(1) has five subunits: alpha(3), beta(3), gamma(1), delta(1), epsilon(1). CF(0) has three main subunits: a(1), b(2) and c(9-12). The alpha and beta chains form an alternating ring which encloses part of the gamma chain. CF(1) is attached to CF(0) by a central stalk formed by the gamma and epsilon chains, while a peripheral stalk is formed by the delta and b chains.

The protein resides in the cell membrane. It carries out the reaction ATP + H2O + 4 H(+)(in) = ADP + phosphate + 5 H(+)(out). In terms of biological role, produces ATP from ADP in the presence of a proton gradient across the membrane. The catalytic sites are hosted primarily by the beta subunits. In Streptococcus mutans serotype c (strain ATCC 700610 / UA159), this protein is ATP synthase subunit beta.